We begin with the raw amino-acid sequence, 955 residues long: Probable autotransporter YcgV (955 aa).

Residues 616–659 (ASGTVPEPTPNPEPTPAPAQPPIVNPDPTPEPAPTPKPTTTADA) form a disordered region. Over residues 622 to 652 (EPTPNPEPTPAPAQPPIVNPDPTPEPAPTPK) the composition is skewed to pro residues. An Autotransporter domain is found at 687 to 955 (NQSKDGNIWL…QVNGGYRFSF (269 aa)).

Its function is as follows. Upon overexpression shows increased adherence to polyvinyl chloride (PVC) plates, increased mature biofilm formation. This is Probable autotransporter YcgV (ycgV) from Escherichia coli (strain K12).